A 148-amino-acid chain; its full sequence is NADPH-dependent 7-cyano-7-deazaguanine reductase (148 aa).

The Thioimide intermediate role is filled by Cys50. Asp57 functions as the Proton donor in the catalytic mechanism. Residues 72 to 74 and 91 to 92 contribute to the substrate site; these read VES and HE.

The protein belongs to the GTP cyclohydrolase I family. QueF type 1 subfamily.

The protein localises to the cytoplasm. It catalyses the reaction 7-aminomethyl-7-carbaguanine + 2 NADP(+) = 7-cyano-7-deazaguanine + 2 NADPH + 3 H(+). Its pathway is tRNA modification; tRNA-queuosine biosynthesis. Catalyzes the NADPH-dependent reduction of 7-cyano-7-deazaguanine (preQ0) to 7-aminomethyl-7-deazaguanine (preQ1). In Helicobacter pylori (strain P12), this protein is NADPH-dependent 7-cyano-7-deazaguanine reductase.